The sequence spans 426 residues: Serine hydroxymethyltransferase (426 aa).

Residues leucine 113 and 117–119 (GHL) each bind (6S)-5,6,7,8-tetrahydrofolate. The residue at position 222 (lysine 222) is an N6-(pyridoxal phosphate)lysine. Residue 363–365 (SAF) participates in (6S)-5,6,7,8-tetrahydrofolate binding.

The protein belongs to the SHMT family. As to quaternary structure, homodimer. The cofactor is pyridoxal 5'-phosphate.

It localises to the cytoplasm. It carries out the reaction (6R)-5,10-methylene-5,6,7,8-tetrahydrofolate + glycine + H2O = (6S)-5,6,7,8-tetrahydrofolate + L-serine. It functions in the pathway one-carbon metabolism; tetrahydrofolate interconversion. It participates in amino-acid biosynthesis; glycine biosynthesis; glycine from L-serine: step 1/1. Catalyzes the reversible interconversion of serine and glycine with tetrahydrofolate (THF) serving as the one-carbon carrier. This reaction serves as the major source of one-carbon groups required for the biosynthesis of purines, thymidylate, methionine, and other important biomolecules. Also exhibits THF-independent aldolase activity toward beta-hydroxyamino acids, producing glycine and aldehydes, via a retro-aldol mechanism. This chain is Serine hydroxymethyltransferase, found in Bacteroides fragilis (strain ATCC 25285 / DSM 2151 / CCUG 4856 / JCM 11019 / LMG 10263 / NCTC 9343 / Onslow / VPI 2553 / EN-2).